The following is a 1038-amino-acid chain: MGFIFSTEKVVYVLLLIFVCLENFGSNAQLLPEDEVQTLRTIFRKLQNQTVNIERTSCSDQNWNFVVESASNSPTSNITCDCTFNASSVCRVTNIQLKSFSLPGIFPPEFGNLTRLREIDLSRNFLNGTIPTTLSQIPLEILSVIGNRLSGPFPPQLGDITTLTDVNLETNLFTGPLPRNLGNLRSLKELLLSANNFTGQIPESLSNLKNLTEFRIDGNSLSGKIPDFIGNWTLLERLDLQGTSMEGPIPPSISNLTNLTELRITDLRGQAAFSFPDLRNLMKMKRLVLRNCLIRGPIPEYIGSMSELKTLDLSSNMLTGVIPDTFRNLDAFNFMFLNNNSLTGPVPQFIINSKENLDLSDNNFTQPPTLSCNQLDVNLISSYPSVTDNSVQWCLREGLPCPEDAKQSSLFINCGGSRLKIGKDTYTDDLNSRGQSTFSSVSERWGYSSSGVWLGKEDAGYLATDRFNLINGSTPEYYKTARLSPQSLKYYGLCLRRGSYKLQLHFAEIMFSNDQTFNSLGRRIFDIYVQGNLLERDFNIAERAGGVGKPFIRQIDGVQVNGSTLEIHLQWTGKGTNVIPTRGVYGPLISAITITPNFKVDTGKPLSNGAVAGIVIAACAVFGLLVLVILRLTGYLGGKEVDENEELRGLDLQTGSFTLKQIKRATNNFDPENKIGEGGFGPVYKGVLADGMTIAVKQLSSKSKQGNREFVTEIGMISALQHPNLVKLYGCCIEGKELLLVYEYLENNSLARALFGTEKQRLHLDWSTRNKICIGIAKGLAYLHEESRLKIVHRDIKATNVLLDLSLNAKISDFGLAKLNDDENTHISTRIAGTIGYMAPEYAMRGYLTDKADVYSFGVVCLEIVSGKSNTNYRPKEEFVYLLDWAYVLQEQGSLLELVDPDLGTSFSKKEAMRMLNIALLCTNPSPTLRPPMSSVVSMLEGKIKVQPPLVKREADPSGSAAMRFKALELLSQDSESQVSTYARNREQDISSSSMDGPWVDSSFSEPGKDVSLQQQEEGRSSSSSRKLLDDLTDVKIE.

An N-terminal signal peptide occupies residues 1–28 (MGFIFSTEKVVYVLLLIFVCLENFGSNA). The Extracellular segment spans residues 29–609 (QLLPEDEVQT…VDTGKPLSNG (581 aa)). N-linked (GlcNAc...) asparagine glycosylation is found at N48, N77, N85, N112, and N127. 6 LRR repeats span residues 113 to 137 (LTRLREIDLSRNFLNGTIPTTLSQI), 139 to 160 (LEILSVIGNRLSGPFPPQLGDI), 161 to 184 (TTLTDVNLETNLFTGPLPRNLGNL), 185 to 208 (RSLKELLLSANNFTGQIPESLSNL), 210 to 234 (NLTEFRIDGNSLSGKIPDFIGNWTL), and 236 to 256 (ERLDLQGTSMEGPIPPSISNL). 5 N-linked (GlcNAc...) asparagine glycosylation sites follow: N196, N210, N231, N255, and N258. LRR repeat units lie at residues 259–281 (LTELRITDLRGQAAFSFPDLRNL), 282–305 (MKMKRLVLRNCLIRGPIPEYIGSM), 306–328 (SELKTLDLSSNMLTGVIPDTFRN), 330–351 (DAFNFMFLNNNSLTGPVPQFII), and 352–374 (NSKENLDLSDNNFTQPPTLSCNQ). N339, N363, N471, and N561 each carry an N-linked (GlcNAc...) asparagine glycan. The chain crosses the membrane as a helical span at residues 610–630 (AVAGIVIAACAVFGLLVLVIL). The Cytoplasmic segment spans residues 631–1038 (RLTGYLGGKE…LDDLTDVKIE (408 aa)). T658 is subject to Phosphothreonine. The 282-residue stretch at 669–950 (FDPENKIGEG…EGKIKVQPPL (282 aa)) folds into the Protein kinase domain. Residues 675 to 683 (IGEGGFGPV) and K697 contribute to the ATP site. At Y742 the chain carries Phosphotyrosine. Catalysis depends on D795, which acts as the Proton acceptor. S828 bears the Phosphoserine mark. 2 positions are modified to phosphothreonine: T829 and T834. Y842 is modified (phosphotyrosine). The segment at 984–1038 (RNREQDISSSSMDGPWVDSSFSEPGKDVSLQQQEEGRSSSSSRKLLDDLTDVKIE) is disordered. Over residues 1027-1038 (KLLDDLTDVKIE) the composition is skewed to basic and acidic residues.

This sequence belongs to the protein kinase superfamily. Ser/Thr protein kinase family.

It localises to the membrane. It catalyses the reaction L-seryl-[protein] + ATP = O-phospho-L-seryl-[protein] + ADP + H(+). The catalysed reaction is L-threonyl-[protein] + ATP = O-phospho-L-threonyl-[protein] + ADP + H(+). This is Probable LRR receptor-like serine/threonine-protein kinase At1g53430 from Arabidopsis thaliana (Mouse-ear cress).